The sequence spans 305 residues: Translation initiation factor eIF2B subunit alpha (305 aa).

Lys-35 carries the post-translational modification N6-acetyllysine.

The protein belongs to the eIF-2B alpha/beta/delta subunits family. In terms of assembly, component of the translation initiation factor 2B (eIF2B) complex which is a heterodecamer of two sets of five different subunits: alpha, beta, gamma, delta and epsilon. Subunits alpha, beta and delta comprise a regulatory subcomplex and subunits epsilon and gamma comprise a catalytic subcomplex. Within the complex, the hexameric regulatory complex resides at the center, with the two heterodimeric catalytic subcomplexes bound on opposite sides.

It is found in the cytoplasm. The protein resides in the cytosol. Activated by the chemical integrated stress response (ISR) inhibitor ISRIB which stimulates guanine nucleotide exchange factor activity for both phosphorylated and unphosphorylated eIF2. Functionally, acts as a component of the translation initiation factor 2B (eIF2B) complex, which catalyzes the exchange of GDP for GTP on eukaryotic initiation factor 2 (eIF2) gamma subunit. Its guanine nucleotide exchange factor activity is repressed when bound to eIF2 complex phosphorylated on the alpha subunit, thereby limiting the amount of methionyl-initiator methionine tRNA available to the ribosome and consequently global translation is repressed. The chain is Translation initiation factor eIF2B subunit alpha (Eif2b1) from Rattus norvegicus (Rat).